The following is a 364-amino-acid chain: GDP-fucose transporter 1 (364 aa).

8 consecutive transmembrane segments (helical) span residues 34–56, 76–98, 111–130, 140–162, 167–185, 195–214, 227–249, and 264–286; these read FVLRALQIALVVSLYWVTSISMV, VTFYQCLVTVLLCKGLSSLATCC, LKVARSVLPLSVVFIGMITF, VAFYNVGRSLTTVFNVLLSYLLL, SFYALLTCSVIIGGFWLGV, SWTGTLFGVLASLCVSLNAI, IWRLTFYNNANACVLFLPLLLAL, and AHFWAMMTLGGLFGFAIGYVTGL. A disordered region spans residues 345-364; the sequence is MKKTQEEPHPRENEKSNMEV.

Belongs to the TPT transporter family. SLC35C subfamily.

It is found in the golgi apparatus membrane. The catalysed reaction is GMP(out) + GDP-beta-L-fucose(in) = GMP(in) + GDP-beta-L-fucose(out). Functionally, antiporter specific for GDP-l-fucose and depending on the concomitant reverse transport of GMP. Involved in GDP-fucose import from the cytoplasm into the Golgi lumen. The polypeptide is GDP-fucose transporter 1 (SLC35C1) (Bos taurus (Bovine)).